Consider the following 20-residue polypeptide: Brevinin-1ITa (20 aa).

Methionine sulfoxide; partial is present on Met8. Cys14 and Cys20 form a disulfide bridge.

The protein belongs to the frog skin active peptide (FSAP) family. Brevinin subfamily. Expressed by the skin glands.

Its subcellular location is the secreted. In terms of biological role, antimicrobial peptide active against Gram-positive bacterium S.epidermidis ATCC 12228 (MIC=4 uM), against Gram-negative bacterium E.coli ATCC 25922 (MIC=64 uM) and against yeast C.parapsilosis ATCC 22019 (MIC=16 uM). Has hemolytic and cytotoxic activity. The polypeptide is Brevinin-1ITa (Rana italica (Italian stream frog)).